Here is a 100-residue protein sequence, read N- to C-terminus: Large ribosomal subunit protein uL23 (100 aa).

It belongs to the universal ribosomal protein uL23 family. In terms of assembly, part of the 50S ribosomal subunit. Contacts protein L29, and trigger factor when it is bound to the ribosome.

Its function is as follows. One of the early assembly proteins it binds 23S rRNA. One of the proteins that surrounds the polypeptide exit tunnel on the outside of the ribosome. Forms the main docking site for trigger factor binding to the ribosome. In Mycobacterium leprae (strain Br4923), this protein is Large ribosomal subunit protein uL23.